Reading from the N-terminus, the 683-residue chain is Leucine-rich repeat protein soc-2 homolog (683 aa).

Low complexity predominate over residues 1–19; that stretch reads MNLCSSGATASTTSLSSTG. 2 disordered regions span residues 1–54 and 74–150; these read MNLC…SDVS and GTDE…IQAD. Residues 26-49 show a composition bias toward gly residues; sequence GVPGGGAEGGGGGGGSGNSGGGGK. Residues 74–86 show a composition bias toward low complexity; it reads GTDELSNANSPAN. Positions 99 to 117 are enriched in polar residues; that stretch reads QQPTGSNGHSHLHNENNAN. 20 LRR repeats span residues 164 to 185, 187 to 208, 210 to 231, 233 to 254, 256 to 277, 279 to 300, 302 to 323, 325 to 346, 348 to 370, 371 to 392, 395 to 416, 419 to 440, 443 to 464, 466 to 487, 489 to 510, 512 to 533, 535 to 556, 558 to 579, 581 to 603, and 605 to 626; these read GIKR…VKEC, HLTE…IGCL, SLRN…LQNC, QLKV…IYRL, SLTT…LRQL, NLTM…IGAL, NLTT…IGNC, NLSA…IGNL, SLVR…KNCK, SMDE…MLAS, GLTT…GPAQ, NVYS…IFSR, GLTK…IGTW, NMVE…IMNL, NLEI…IGNL, RLRI…IGLL, ELQR…IGHL, NLTH…IGSL, SLEN…LALC, and NLKY…IQAG. A compositionally biased stretch (gly residues) spans 661–671; sequence AGGNGGGGAAA. The interval 661-683 is disordered; it reads AGGNGGGGAAAAGGSASRSSDRR. Residues 672 to 683 are compositionally biased toward low complexity; it reads AGGSASRSSDRR.

This sequence belongs to the SHOC2 family.

Acts as a Ras effector and participates in MAPK pathway activation. Probably acts as a regulatory subunit of protein phosphatase that specifically dephosphorylates Raf kinase and stimulate Raf activity at specialized signaling complexes upon Ras activation. In Drosophila sechellia (Fruit fly), this protein is Leucine-rich repeat protein soc-2 homolog (Sur-8).